A 569-amino-acid chain; its full sequence is Urease subunit alpha (569 aa).

Histidine 136, histidine 138, and lysine 219 together coordinate Ni(2+). Lysine 219 bears the N6-carboxylysine mark. Histidine 221 serves as a coordination point for substrate. The Ni(2+) site is built by histidine 248 and histidine 274. Histidine 322 acts as the Proton donor in catalysis. Aspartate 362 is a binding site for Ni(2+).

The protein belongs to the metallo-dependent hydrolases superfamily. Urease alpha subunit family. In terms of assembly, heterotrimer of UreA (gamma), UreB (beta) and UreC (alpha) subunits. Three heterotrimers associate to form the active enzyme. Ni cation serves as cofactor. In terms of processing, carboxylation allows a single lysine to coordinate two nickel ions.

It is found in the cytoplasm. The enzyme catalyses urea + 2 H2O + H(+) = hydrogencarbonate + 2 NH4(+). It functions in the pathway nitrogen metabolism; urea degradation; CO(2) and NH(3) from urea (urease route): step 1/1. The polypeptide is Urease subunit alpha (Microcystis aeruginosa (strain NIES-843 / IAM M-2473)).